Here is a 274-residue protein sequence, read N- to C-terminus: Dermonecrotic toxin SdSicTox-betaIIB1bx (274 aa).

Residue His-5 is part of the active site. 2 residues coordinate Mg(2+): Glu-25 and Asp-27. His-41 acts as the Nucleophile in catalysis. Disulfide bonds link Cys-45–Cys-51 and Cys-47–Cys-190. A Mg(2+)-binding site is contributed by Asp-85.

The protein belongs to the arthropod phospholipase D family. Class II subfamily. The cofactor is Mg(2+). Expressed by the venom gland.

It localises to the secreted. It carries out the reaction an N-(acyl)-sphingosylphosphocholine = an N-(acyl)-sphingosyl-1,3-cyclic phosphate + choline. The enzyme catalyses an N-(acyl)-sphingosylphosphoethanolamine = an N-(acyl)-sphingosyl-1,3-cyclic phosphate + ethanolamine. The catalysed reaction is a 1-acyl-sn-glycero-3-phosphocholine = a 1-acyl-sn-glycero-2,3-cyclic phosphate + choline. It catalyses the reaction a 1-acyl-sn-glycero-3-phosphoethanolamine = a 1-acyl-sn-glycero-2,3-cyclic phosphate + ethanolamine. Its function is as follows. Dermonecrotic toxins cleave the phosphodiester linkage between the phosphate and headgroup of certain phospholipids (sphingolipid and lysolipid substrates), forming an alcohol (often choline) and a cyclic phosphate. This toxin acts on sphingomyelin (SM). It may also act on ceramide phosphoethanolamine (CPE), lysophosphatidylcholine (LPC) and lysophosphatidylethanolamine (LPE), but not on lysophosphatidylserine (LPS), and lysophosphatidylglycerol (LPG). It acts by transphosphatidylation, releasing exclusively cyclic phosphate products as second products. Induces dermonecrosis, hemolysis, increased vascular permeability, edema, inflammatory response, and platelet aggregation. The chain is Dermonecrotic toxin SdSicTox-betaIIB1bx from Sicarius cf. damarensis (strain GJB-2008) (Six-eyed sand spider).